A 122-amino-acid polypeptide reads, in one-letter code: Small ribosomal subunit protein bS6 (122 aa).

It belongs to the bacterial ribosomal protein bS6 family.

Its function is as follows. Binds together with bS18 to 16S ribosomal RNA. The sequence is that of Small ribosomal subunit protein bS6 from Neisseria meningitidis serogroup C (strain 053442).